We begin with the raw amino-acid sequence, 245 residues long: 4-hydroxy-tetrahydrodipicolinate reductase (245 aa).

NAD(+) contacts are provided by residues glycine 8 to methionine 13, glycine 78 to threonine 80, and serine 102 to methionine 105. Histidine 134 serves as the catalytic Proton donor/acceptor. A (S)-2,3,4,5-tetrahydrodipicolinate-binding site is contributed by histidine 135. The Proton donor role is filled by lysine 138. Glycine 144–threonine 145 contacts (S)-2,3,4,5-tetrahydrodipicolinate.

Belongs to the DapB family.

It localises to the cytoplasm. The enzyme catalyses (S)-2,3,4,5-tetrahydrodipicolinate + NAD(+) + H2O = (2S,4S)-4-hydroxy-2,3,4,5-tetrahydrodipicolinate + NADH + H(+). It catalyses the reaction (S)-2,3,4,5-tetrahydrodipicolinate + NADP(+) + H2O = (2S,4S)-4-hydroxy-2,3,4,5-tetrahydrodipicolinate + NADPH + H(+). It functions in the pathway amino-acid biosynthesis; L-lysine biosynthesis via DAP pathway; (S)-tetrahydrodipicolinate from L-aspartate: step 4/4. In terms of biological role, catalyzes the conversion of 4-hydroxy-tetrahydrodipicolinate (HTPA) to tetrahydrodipicolinate. This Rickettsia akari (strain Hartford) protein is 4-hydroxy-tetrahydrodipicolinate reductase.